The chain runs to 261 residues: uncharacterized protein (261 aa).

Glu-46 is a catalytic residue.

It belongs to the PhzF family.

This is an uncharacterized protein from Pseudomonas aeruginosa (strain ATCC 15692 / DSM 22644 / CIP 104116 / JCM 14847 / LMG 12228 / 1C / PRS 101 / PAO1).